Here is a 439-residue protein sequence, read N- to C-terminus: Xylose isomerase (439 aa).

Residues histidine 103 and aspartate 106 contribute to the active site. Mg(2+)-binding residues include glutamate 234, glutamate 270, histidine 273, aspartate 298, aspartate 309, aspartate 311, and aspartate 341.

It belongs to the xylose isomerase family. As to quaternary structure, homotetramer. The cofactor is Mg(2+).

It is found in the cytoplasm. The catalysed reaction is alpha-D-xylose = alpha-D-xylulofuranose. The sequence is that of Xylose isomerase from Bacteroides fragilis (strain YCH46).